The chain runs to 233 residues: Uridylate kinase (233 aa).

Residue 9–10 participates in ATP binding; it reads GS. G43 contributes to the UMP binding site. Residues G44 and R48 each contribute to the ATP site. UMP-binding positions include D65 and 113 to 119; that span reads VTPGQTT. Positions 139, 145, and 148 each coordinate ATP.

This sequence belongs to the UMP kinase family. In terms of assembly, homohexamer.

The protein resides in the cytoplasm. The catalysed reaction is UMP + ATP = UDP + ADP. Its pathway is pyrimidine metabolism; CTP biosynthesis via de novo pathway; UDP from UMP (UMPK route): step 1/1. Inhibited by UTP. Catalyzes the reversible phosphorylation of UMP to UDP. The sequence is that of Uridylate kinase from Methanosarcina acetivorans (strain ATCC 35395 / DSM 2834 / JCM 12185 / C2A).